Here is a 256-residue protein sequence, read N- to C-terminus: Hydroxyethylthiazole kinase (256 aa).

Methionine 37 lines the substrate pocket. Residues lysine 113 and threonine 159 each contribute to the ATP site. Glycine 186 contributes to the substrate binding site.

Belongs to the Thz kinase family. The cofactor is Mg(2+).

The enzyme catalyses 5-(2-hydroxyethyl)-4-methylthiazole + ATP = 4-methyl-5-(2-phosphooxyethyl)-thiazole + ADP + H(+). Its pathway is cofactor biosynthesis; thiamine diphosphate biosynthesis; 4-methyl-5-(2-phosphoethyl)-thiazole from 5-(2-hydroxyethyl)-4-methylthiazole: step 1/1. Its function is as follows. Catalyzes the phosphorylation of the hydroxyl group of 4-methyl-5-beta-hydroxyethylthiazole (THZ). The sequence is that of Hydroxyethylthiazole kinase from Exiguobacterium sibiricum (strain DSM 17290 / CCUG 55495 / CIP 109462 / JCM 13490 / 255-15).